Consider the following 135-residue polypeptide: Large ribosomal subunit protein uL16c (135 aa).

It belongs to the universal ribosomal protein uL16 family. In terms of assembly, part of the 50S ribosomal subunit.

The protein resides in the plastid. It is found in the chloroplast. This is Large ribosomal subunit protein uL16c from Phaseolus vulgaris (Kidney bean).